The sequence spans 32 residues: Conotoxin sr7a (32 aa).

Intrachain disulfides connect C1–C17, C8–C21, and C16–C31. Residue S32 is modified to Serine amide.

Expressed by the venom duct.

Its subcellular location is the secreted. Elicits hyperactivity when injected intracranially into mice and produces paralysis when injected into the pedal muscle of freshwater snails, Pomacea paludosa, but it has no apparent effect after intramuscular injection into the limpet Patella opea or the freshwater fish Lebistes reticulatus. The polypeptide is Conotoxin sr7a (Conus spurius (Alphabet cone)).